The following is a 217-amino-acid chain: Heart- and neural crest derivatives-expressed protein 2 (217 aa).

The disordered stretch occupies residues Asp76–Asn116. Residues Val83 to Gly94 show a composition bias toward gly residues. A compositionally biased stretch (basic residues) spans Pro97 to Thr112. Positions Lys99–Leu151 constitute a bHLH domain.

Efficient DNA binding requires dimerization with another bHLH protein. Forms homodimers and heterodimers with TCF3 gene products E12 and E47, HAND1 and HEY1, HEY2 and HEYL (hairy-related transcription factors).

The protein localises to the nucleus. Its function is as follows. Essential for cardiac morphogenesis, particularly for the formation of the right ventricle and of the aortic arch arteries. Required for vascular development and regulation of angiogenesis, possibly through a VEGF signaling pathway. Also plays an important role in limb development, particularly in the establishment of anterior-posterior polarization, acting as an upstream regulator of sonic hedgehog (SHH) induction in the limb bud. Is involved in the development of branchial arches, which give rise to unique structures in the head and neck. Binds DNA on E-box consensus sequence 5'-CANNTG-3'. This chain is Heart- and neural crest derivatives-expressed protein 2 (Hand2), found in Rattus norvegicus (Rat).